A 219-amino-acid chain; its full sequence is Guanylate kinase (219 aa).

One can recognise a Guanylate kinase-like domain in the interval 15 to 194 (GLMFVLSSPS…AFESVKAILR (180 aa)). 22-29 (SPSGAGKT) serves as a coordination point for ATP.

It belongs to the guanylate kinase family.

Its subcellular location is the cytoplasm. It carries out the reaction GMP + ATP = GDP + ADP. Functionally, essential for recycling GMP and indirectly, cGMP. In Rhodopseudomonas palustris (strain BisB5), this protein is Guanylate kinase.